A 464-amino-acid polypeptide reads, in one-letter code: Asparagine--tRNA ligase (464 aa).

It belongs to the class-II aminoacyl-tRNA synthetase family. As to quaternary structure, homodimer.

The protein localises to the cytoplasm. The catalysed reaction is tRNA(Asn) + L-asparagine + ATP = L-asparaginyl-tRNA(Asn) + AMP + diphosphate + H(+). The protein is Asparagine--tRNA ligase of Xanthomonas euvesicatoria pv. vesicatoria (strain 85-10) (Xanthomonas campestris pv. vesicatoria).